Here is a 500-residue protein sequence, read N- to C-terminus: NAD(P)H-quinone oxidoreductase chain 4, chloroplastic (500 aa).

A run of 14 helical transmembrane segments spans residues 4 to 24, 31 to 51, 84 to 104, 111 to 131, 134 to 154, 167 to 187, 212 to 232, 242 to 262, 272 to 292, 308 to 328, 330 to 350, 386 to 406, 411 to 431, and 462 to 482; these read FPWL…IFFL, VIFW…TYAF, GLSI…TLAA, ARLF…LFSC, LLLF…LLSM, FILY…GIGL, IFYI…PLHT, HYST…YGLV, AHSL…IYAA, SSVS…DIGL, GALL…FLAG, LALP…GLIT, LLMA…LTPI, and LFLS…PDFV.

The protein belongs to the complex I subunit 4 family.

The protein resides in the plastid. It is found in the chloroplast thylakoid membrane. The catalysed reaction is a plastoquinone + NADH + (n+1) H(+)(in) = a plastoquinol + NAD(+) + n H(+)(out). It carries out the reaction a plastoquinone + NADPH + (n+1) H(+)(in) = a plastoquinol + NADP(+) + n H(+)(out). The polypeptide is NAD(P)H-quinone oxidoreductase chain 4, chloroplastic (Jasminum nudiflorum (Winter jasmine)).